A 367-amino-acid polypeptide reads, in one-letter code: MAFKLWLLDEETIYEHVFERYTQLEGQSGKLAQDLGIQDRRGGVLEITFEPSGLEGGRKKKRVRRRNKASSVEEDQNVAVDSYHVSVGQSISSLHSSRDNGNSTTGYVLWSTTPFFINWLLYSTSAAPFRLGSQVEVTCGSSCEGHXLELPRLXDLTGADRGKRGILELGAGISGILPVILGNFVDTYVSTDQKGILNKLKDNIMENLSQLTRKRCISRSLRLELPTVEPVGDADITAASLPSKSTLHLEVAALDWEKINLQDKKTHSLHPELSLIGETCSSVYVIAMDVIYNEYLIDPFLKTLKQLKHWLQTTYNLQFHVLVGIHLRSQEVTTLFLEKAIIEYDFTVYDIVDQVIQESRFNFYLIT.

Residues 55-74 (EGGRKKKRVRRRNKASSVEE) are disordered. A compositionally biased stretch (basic residues) spans 58–68 (RKKKRVRRRNK). Residues Trp110, 170–172 (GAG), Asp192, Trp256, and Met288 each bind S-adenosyl-L-methionine.

This sequence belongs to the class I-like SAM-binding methyltransferase superfamily. RKM5 family.

Functionally, S-adenosyl-L-methionine-dependent protein-lysine N-methyltransferase that monomethylates 60S ribosomal protein L1 (RPL1A and RPL1B) at 'Lys-46'. This chain is Ribosomal lysine N-methyltransferase 5 (RKM5), found in Saccharomyces cerevisiae (strain VIN 13) (Baker's yeast).